A 546-amino-acid polypeptide reads, in one-letter code: Chaperonin GroEL 1 (546 aa).

ATP contacts are provided by residues 29–32, 86–90, Gly-414, and Asp-499; these read TLGP and DGTTT.

It belongs to the chaperonin (HSP60) family. As to quaternary structure, forms a cylinder of 14 subunits composed of two heptameric rings stacked back-to-back. Interacts with the co-chaperonin GroES.

It is found in the cytoplasm. The catalysed reaction is ATP + H2O + a folded polypeptide = ADP + phosphate + an unfolded polypeptide.. Functionally, together with its co-chaperonin GroES, plays an essential role in assisting protein folding. The GroEL-GroES system forms a nano-cage that allows encapsulation of the non-native substrate proteins and provides a physical environment optimized to promote and accelerate protein folding. In Roseiflexus sp. (strain RS-1), this protein is Chaperonin GroEL 1.